A 473-amino-acid chain; its full sequence is MAYQDFREFLAALEKEGQLLTVNEEVKPEPDLGASARAASNLGDKSPALLFNNIYGYHNARIAMNVIGSWPNHAMMLGMPKDTPVKEQFFEFAKRYDQFPMPVKREETAPFHENEITEDINLFDILPLFRINQGDGGYYLDKACVISRDLEDPDNFGKQNVGIYRMQVKGKDRLGIQPVPQHDIAIHLRQAEERGINLPVTIALGCEPVITTAASTPLLYDQSEYEMAGAIQGEPYRIVKSKLSDLDVPWGAEVVLEGEIIAGEREYEGPFGEFTGHYSGGRSMPIIKIKRVYHRNNPIFEHLYLGMPWTECDYMIGINTCVPLYQQLKEAYPNEIVAVNAMYTHGLIAIVSTKTRYGGFAKAVGMRALTTPHGLGYCKMVIVVDEDVDPFNLPQVMWALSTKMHPKHDAVIIPDLSVLPLDPGSNPSGITHKMILDATTPVAPETRGHYSQPLDSPLTTKEWEQKLMDLMNK.

Asn-160, His-182, and Glu-224 together coordinate Mn(2+). Prenylated FMN is bound by residues 160 to 165 (NVGIYR) and 181 to 182 (QH). The active-site Proton donor is Glu-273.

This sequence belongs to the UbiD family. YclC subfamily. The cofactor is prenylated FMN. Mn(2+) is required as a cofactor.

It catalyses the reaction 4-hydroxybenzoate + H(+) = phenol + CO2. The catalysed reaction is vanillate + H(+) = guaiacol + CO2. Its function is as follows. Involved in the non-oxidative decarboxylation and detoxification of phenolic derivatives under both aerobic and anaerobic conditions. Phenolic acid decarboxylase that catalyzes the reversible decarboxylation of 4-hydroxybenzoate and vanillate. Could also catalyze the decarboxylation of salicylate. Is not active on di- and tri-hydroxybenzoate derivatives. This Bacillus subtilis (strain 168) protein is Phenolic acid decarboxylase.